The sequence spans 416 residues: Phosphoglycerate kinase (416 aa).

14 residues coordinate (2R)-3-phosphoglycerate: V23, D24, F25, N26, Q38, R39, S62, H63, G65, R66, L121, R122, H168, and R169. An ADP-binding site is contributed by G212. G212 lines the CDP pocket. Positions 213 and 214 each coordinate AMP. Position 213 (A213) interacts with ATP. A213 serves as a coordination point for Mg(2+). Mg(2+)-binding residues include A216 and D217. D217 provides a ligand contact to CDP. K218 is an AMP binding site. Residue K218 coordinates ATP. ADP is bound at residue G236. Residue G236 coordinates CDP. Positions 237 and 311 each coordinate AMP. Residues G237 and G311 each coordinate ATP. CDP contacts are provided by G336 and F341. Position 341 (F341) interacts with ADP. An AMP-binding site is contributed by E342. E342, D373, and T374 together coordinate ATP. Position 373 (D373) interacts with Mg(2+).

Belongs to the phosphoglycerate kinase family. As to quaternary structure, monomer. Requires Mg(2+) as cofactor.

It is found in the cytoplasm. The protein resides in the mitochondrion. The enzyme catalyses (2R)-3-phosphoglycerate + ATP = (2R)-3-phospho-glyceroyl phosphate + ADP. It functions in the pathway carbohydrate degradation; glycolysis; pyruvate from D-glyceraldehyde 3-phosphate: step 2/5. Its function is as follows. Catalyzes one of the two ATP producing reactions in the glycolytic pathway via the reversible conversion of 1,3-diphosphoglycerate to 3-phosphoglycerate. Both L- and D- forms of purine and pyrimidine nucleotides can be used as substrates, but the activity is much lower on pyrimidines. Negatively regulates the biosynthesis of acetyl-CoA from pyruvate in the mitochondrion. In Eremothecium gossypii (strain ATCC 10895 / CBS 109.51 / FGSC 9923 / NRRL Y-1056) (Yeast), this protein is Phosphoglycerate kinase (PGK1).